The chain runs to 483 residues: Altronate oxidoreductase (483 aa).

Residue 18 to 29 (IIQFGEGNFLRA) participates in NAD(+) binding.

The protein belongs to the mannitol dehydrogenase family. UxaB subfamily.

It carries out the reaction D-altronate + NAD(+) = keto-D-tagaturonate + NADH + H(+). Its pathway is carbohydrate metabolism; pentose and glucuronate interconversion. This Enterobacter sp. (strain 638) protein is Altronate oxidoreductase.